We begin with the raw amino-acid sequence, 553 residues long: Protein spartin (553 aa).

The 82-residue stretch at I15–V96 folds into the MIT domain. The disordered stretch occupies residues D105–N130. A compositionally biased stretch (basic and acidic residues) spans E113–R123. In terms of domain architecture, Senescence spans I325–K509.

Interacts with Eps-15 (via C-terminal region); the interaction is required for spartin localization to the NMJ presynaptic membrane. Expressed in larval brain, ventral nerve cord and neuropil (at protein level).

The protein resides in the presynaptic cell membrane. It is found in the early endosome. It localises to the lipid droplet. In terms of biological role, during postembryonic development, functions with endocytic adapter Eps-15 in neurons to restrain synaptic growth, by inhibiting BMP signaling, and to control synaptic endocytosis. Required presynaptically for neuromuscular junction (NMJ) neurotransmission. Inhibits neuronal BMP signaling by promoting endocytic internalization and subsequent endosomal trafficking of the BMP receptor wit. In this way, regulates the Fmr1 translational regulator controlling Futsch expression to modulate neuronal microtubule stability, which controls both synaptogenesis and neuronal survival. This Drosophila melanogaster (Fruit fly) protein is Protein spartin.